The chain runs to 228 residues: uncharacterized protein (228 aa).

6 helical membrane passes run G14 to I34, F53 to V73, G108 to L128, A148 to F168, T178 to I198, and S200 to I220.

The protein localises to the cell membrane. This is an uncharacterized protein from Bacillus subtilis (strain 168).